The sequence spans 577 residues: Adenine deaminase (577 aa).

Belongs to the metallo-dependent hydrolases superfamily. Adenine deaminase family. The cofactor is Mn(2+).

It carries out the reaction adenine + H2O + H(+) = hypoxanthine + NH4(+). This chain is Adenine deaminase, found in Kosmotoga olearia (strain ATCC BAA-1733 / DSM 21960 / TBF 19.5.1).